The chain runs to 78 residues: Small ribosomal subunit protein uS17 (78 aa).

The protein belongs to the universal ribosomal protein uS17 family. In terms of assembly, part of the 30S ribosomal subunit.

One of the primary rRNA binding proteins, it binds specifically to the 5'-end of 16S ribosomal RNA. The protein is Small ribosomal subunit protein uS17 of Rhizobium meliloti (strain 1021) (Ensifer meliloti).